A 358-amino-acid polypeptide reads, in one-letter code: tRNA-specific 2-thiouridylase MnmA (358 aa).

ATP-binding positions include 6–13 and M32; that span reads ALSGGVDS. The active-site Nucleophile is the C103. C103 and C201 are disulfide-bonded. G127 contributes to the ATP binding site. Positions 151-153 are interaction with tRNA; sequence KDQ. The Cysteine persulfide intermediate role is filled by C201.

Belongs to the MnmA/TRMU family.

It localises to the cytoplasm. It carries out the reaction S-sulfanyl-L-cysteinyl-[protein] + uridine(34) in tRNA + AH2 + ATP = 2-thiouridine(34) in tRNA + L-cysteinyl-[protein] + A + AMP + diphosphate + H(+). Functionally, catalyzes the 2-thiolation of uridine at the wobble position (U34) of tRNA, leading to the formation of s(2)U34. The chain is tRNA-specific 2-thiouridylase MnmA from Thermotoga petrophila (strain ATCC BAA-488 / DSM 13995 / JCM 10881 / RKU-1).